Consider the following 327-residue polypeptide: 2-keto-3-deoxygluconate permease (327 aa).

10 helical membrane passes run 10–30 (IPGG…TFSP), 42–62 (GMIT…GASI), 73–93 (KSGT…AIAS), 95–115 (IIPE…LALV), 139–159 (AGAF…IILG), 163–183 (IASF…VGFA), 199–219 (VQTL…LTVI), 224–244 (LLGI…LIIA), 254–274 (TAGI…VLIA), and 289–309 (SLVA…TSIW).

The protein belongs to the KdgT transporter family.

It localises to the cell inner membrane. The catalysed reaction is 2-dehydro-3-deoxy-D-gluconate(in) + H(+)(in) = 2-dehydro-3-deoxy-D-gluconate(out) + H(+)(out). Catalyzes the proton-dependent uptake of 2-keto-3-deoxygluconate (KDG) into the cell. The polypeptide is 2-keto-3-deoxygluconate permease (Escherichia coli O157:H7).